The sequence spans 302 residues: Sulfate adenylyltransferase subunit 2 (302 aa).

It belongs to the PAPS reductase family. CysD subfamily. In terms of assembly, heterodimer composed of CysD, the smaller subunit, and CysN.

It catalyses the reaction sulfate + ATP + H(+) = adenosine 5'-phosphosulfate + diphosphate. Its pathway is sulfur metabolism; hydrogen sulfide biosynthesis; sulfite from sulfate: step 1/3. In terms of biological role, with CysN forms the ATP sulfurylase (ATPS) that catalyzes the adenylation of sulfate producing adenosine 5'-phosphosulfate (APS) and diphosphate, the first enzymatic step in sulfur assimilation pathway. APS synthesis involves the formation of a high-energy phosphoric-sulfuric acid anhydride bond driven by GTP hydrolysis by CysN coupled to ATP hydrolysis by CysD. The polypeptide is Sulfate adenylyltransferase subunit 2 (Enterobacter sp. (strain 638)).